Reading from the N-terminus, the 179-residue chain is Peptidyl-tRNA hydrolase (179 aa).

TRNA is bound at residue tyrosine 14. Histidine 19 (proton acceptor) is an active-site residue. TRNA contacts are provided by tyrosine 60, asparagine 62, and asparagine 108.

The protein belongs to the PTH family. As to quaternary structure, monomer.

Its subcellular location is the cytoplasm. The enzyme catalyses an N-acyl-L-alpha-aminoacyl-tRNA + H2O = an N-acyl-L-amino acid + a tRNA + H(+). Functionally, hydrolyzes ribosome-free peptidyl-tRNAs (with 1 or more amino acids incorporated), which drop off the ribosome during protein synthesis, or as a result of ribosome stalling. Catalyzes the release of premature peptidyl moieties from peptidyl-tRNA molecules trapped in stalled 50S ribosomal subunits, and thus maintains levels of free tRNAs and 50S ribosomes. In Mycoplasma mobile (strain ATCC 43663 / 163K / NCTC 11711) (Mesomycoplasma mobile), this protein is Peptidyl-tRNA hydrolase.